Reading from the N-terminus, the 398-residue chain is Acetate kinase (398 aa).

Asparagine 8 is a binding site for Mg(2+). ATP is bound at residue lysine 15. Residue arginine 89 coordinates substrate. Aspartate 146 serves as the catalytic Proton donor/acceptor. Residues 206–210 (HIGNG), 281–283 (DLR), and 329–333 (GVGEN) each bind ATP. Glutamate 383 serves as a coordination point for Mg(2+).

This sequence belongs to the acetokinase family. Homodimer. Requires Mg(2+) as cofactor. Mn(2+) is required as a cofactor.

Its subcellular location is the cytoplasm. It catalyses the reaction acetate + ATP = acetyl phosphate + ADP. It participates in metabolic intermediate biosynthesis; acetyl-CoA biosynthesis; acetyl-CoA from acetate: step 1/2. Catalyzes the formation of acetyl phosphate from acetate and ATP. Can also catalyze the reverse reaction. The protein is Acetate kinase of Macrococcus caseolyticus (strain JCSC5402) (Macrococcoides caseolyticum).